We begin with the raw amino-acid sequence, 2894 residues long: uncharacterized protein (2894 aa).

Residues 8–28 form a helical membrane-spanning segment; it reads ISIFVFTILLLSNVSLGLNVS. PbH1 repeat units lie at residues 543 to 567, 2085 to 2107, 2135 to 2156, 2158 to 2180, 2201 to 2223, 2224 to 2244, 2245 to 2266, 2267 to 2289, 2290 to 2311, 2341 to 2363, 2367 to 2389, 2390 to 2419, 2422 to 2444, 2455 to 2477, 2479 to 2501, 2512 to 2542, 2550 to 2582, 2589 to 2611, 2612 to 2633, and 2638 to 2660; these read EVRW…DISL, NYPL…SMLN, FGNI…VLYK, GNGI…YSKN, ISSI…LLEN, SSSS…YLKE, NYIS…EIVN, SSNV…AIFN, GENV…LSYG, LNNL…FIYS, ASNV…YIYG, VNAI…KISG, TKGV…SLEG, VENN…YIGG, VENV…LIQE, GTNI…TVGA, NGYI…EVYG, SLEF…LIGA, SKDI…TIPN, and PYNI…DLDD.

It is found in the membrane. This is an uncharacterized protein from Methanocaldococcus jannaschii (strain ATCC 43067 / DSM 2661 / JAL-1 / JCM 10045 / NBRC 100440) (Methanococcus jannaschii).